Consider the following 289-residue polypeptide: uncharacterized protein (289 aa).

The next 9 helical transmembrane spans lie at asparagine 4–valine 24, leucine 44–phenylalanine 64, valine 68–phenylalanine 88, isoleucine 106–leucine 126, isoleucine 138–valine 158, isoleucine 166–valine 186, glycine 196–valine 216, leucine 230–glycine 250, and tryptophan 258–serine 278.

It is found in the cell membrane. This is an uncharacterized protein from Corynebacterium glutamicum (strain ATCC 13032 / DSM 20300 / JCM 1318 / BCRC 11384 / CCUG 27702 / LMG 3730 / NBRC 12168 / NCIMB 10025 / NRRL B-2784 / 534).